The chain runs to 924 residues: Protein argonaute 4 (924 aa).

2 disordered regions span residues 1–37 and 159–185; these read MDSTNGNGADLESANGANGSGVTEALPPPPPVIPPNV and TRANGNGSPNGNESPSDGDRKRLRRPN. A compositionally biased stretch (pro residues) spans 26–37; it reads LPPPPPVIPPNV. The span at 162-173 shows a compositional bias: low complexity; sequence NGNGSPNGNESP. A PAZ domain is found at 292 to 408; the sequence is PVVDFLIANQ…IPLELCALVP (117 aa). The region spanning 577 to 885 is the Piwi domain; the sequence is FILCVLPDKK…AAAQLGTFMK (309 aa). The Nuclear localization signal motif lies at 584–591; that stretch reads DKKNSDLY.

This sequence belongs to the argonaute family. Ago subfamily. In terms of assembly, interacts with NRPE1 (via C-terminus). Binding to NRPE1 is required for its function in RdDM. Interacts with turnip crinkle virus (TCV) capsid protein P38; this interaction inhibits probably RNA silencing ability of AGO4. Interacts with SDE3. Binds to RDM3. Binds chromatin at loci subject to transcriptional silencing. Interacts with MBD6. As to expression, expressed in embryos, mature leaves, vascular tissue of the sepals, stamens and stigma, at the tip of the style and siliques.

The protein localises to the nucleus. The protein resides in the nucleolus. It is found in the nucleoplasm. It localises to the cajal body. Its function is as follows. Together with RDM3, required for transcriptional gene silencing (TGS) by DNA methylation and repressive histone modifications (H3K9me2) of several chromatin loci. Component of the RISC complex that associate with the small interfering RNA (siRNA) pathway involved in direct cytosine methylation at endogenous DNA repeats. Forms a AGO4/NRPE1/siRNA complex in cajal body, facilitating its function in RNA-directed gene silencing of target loci. Required for CpNpG and asymmetric DNA methylation as well as histone H3 'Lys-9' methylation (H3K9me) at SUP and SN1 loci. May be not required for CpG methylation. Required for the production and maintenance of retrotransposon SN1 and Copia and ribosomal 5S 25 nucleotide siRNAs specialized in gene silencing at chromatin level. Involved in de novo methylation of FWA gene and required for the maintenance of RNA-directed DNA methylation (RdDM) triggered by inverted repeat transgenes. Interacts with miRNA miR390 and miR172, targeting respectively TAS3 and AP2 mRNAs, and mediates cleavage of miRNA targets. Associates mainly with small RNAs of 24 nucleotide in length and preferentially recruits small RNAs with a 5' terminal adenosine. Targeted by the turnip yellows virus (TuYV) protein P0 (via F-box-like domain) for probable proteasome degradation and thereby inactivating AGO4 function in RNA silencing. Required for resistance to the bacterial pathogen P.syringae. Works independently of the RdDM pathway in mediating resistance to P.syringae. RdDM is involved in viral genome methylation as an epigenetic defense against geminiviruses. This is Protein argonaute 4 from Arabidopsis thaliana (Mouse-ear cress).